The chain runs to 281 residues: Probable protein phosphatase 2C 9 (281 aa).

Residues 33–280 (KYGFSLVKGK…DDISCVVVRF (248 aa)) form the PPM-type phosphatase domain. Mn(2+) contacts are provided by Asp-70, Gly-71, Asp-232, and Asp-271.

It belongs to the PP2C family. Interacts with phytochromes (via N-terminus). Requires Mg(2+) as cofactor. It depends on Mn(2+) as a cofactor.

It is found in the nucleus. It catalyses the reaction O-phospho-L-seryl-[protein] + H2O = L-seryl-[protein] + phosphate. The catalysed reaction is O-phospho-L-threonyl-[protein] + H2O = L-threonyl-[protein] + phosphate. Involved in the regulation of phytochrome signaling. May regulate phytochrome-interacting factor 3 (PIF3) through the dephosphorylation of phytochrome. This chain is Probable protein phosphatase 2C 9, found in Arabidopsis thaliana (Mouse-ear cress).